Reading from the N-terminus, the 2622-residue chain is Ankyrin-3 (2622 aa).

Residues 1 to 44 (MAHAASQLKKNRDLEINAEEETEKKKKHRKRSRDRKKKSDANAS) form a disordered region. The segment covering 25-38 (KKKHRKRSRDRKKK) has biased composition (basic residues). The residue at position 39 (Ser39) is a Phosphoserine. ANK repeat units lie at residues 73 to 102 (NGLN…NVDA), 106 to 135 (KGNT…NVNA), 139 to 168 (NGFT…SQSL), 172 to 201 (DGFT…KGKV), 203 to 230 (LPAL…NADI), 242 to 271 (SGFT…AVDF), 275 to 304 (NDIT…KIDA), 308 to 337 (DGLT…PILS), 341 to 370 (NGLS…PVDD), 374 to 403 (DYLT…NPNA), 407 to 436 (NGFT…SIQA), 440 to 469 (SGLT…SPNT), 473 to 502 (RGET…QVEA), 506 to 535 (DDQT…SPNA), 539 to 568 (SGYT…SLSI), 572 to 601 (KGFT…SPDA), 605 to 634 (SGLT…SPHA), 638 to 667 (NGYT…DANA), 671 to 700 (QGIA…NVNL), 704 to 733 (SGLT…HVDA), 737 to 766 (MGYT…KVNA), 770 to 799 (NGYT…SPNE), and 803 to 832 (NGNT…EIMT). Ser631 is modified (phosphoserine). Phosphoserine is present on residues Val851, Ser855, Ser869, Ser875, Ser921, Ser924, Ser930, Ser965, Ser967, and Ser1121. A disordered region spans residues 868 to 889 (LSDGEYISDGEEGEDAITGDTD). The span at 873–884 (YISDGEEGEDAI) shows a compositional bias: acidic residues. 2 ZU5 domains span residues 992 to 1147 (FLVS…VVSR) and 1149 to 1296 (KQES…LADC). Phosphoserine occurs at positions 1458 and 1469. The segment at 1510-1539 (TPITVPGPAKSGSLSSSPSNTPSASPLKSI) is disordered. Residues 1515–1536 (PGPAKSGSLSSSPSNTPSASPL) are compositionally biased toward low complexity. Phosphoserine is present on residues Ser1621, Ser1624, Ser1679, Ser1984, Ser2102, Ser2114, and Ser2117. Disordered regions lie at residues 1968 to 1992 (VESK…WTEF), 2099 to 2147 (ILES…FHEV), and 2292 to 2312 (SPDV…KDNQ). Positions 1977 to 1986 (PKSDKGHSPE) are enriched in basic and acidic residues. The segment covering 2106–2127 (FSQHDQDKSPLSDSGFETRSEK) has biased composition (basic and acidic residues). Residues 2128 to 2137 (TPSAPQSAES) show a composition bias toward polar residues. The Death domain occupies 2336-2420 (TDIRMAIVAD…DIVTLLEGPI (85 aa)). Phosphoserine occurs at positions 2457, 2475, and 2544. Positions 2568–2622 (CVPVGMKKMTRTPADGKARLNLQEEEGSARSEPKQGEGYKVKTKKEIRNVEKKAH) are disordered. Over residues 2594–2622 (GSARSEPKQGEGYKVKTKKEIRNVEKKAH) the composition is skewed to basic and acidic residues.

As to quaternary structure, may be a constituent of a NFASC/NRCAM/ankyrin G complex. Interacts with RHBG. Directly interacts with DMD and betaDAG1; this interaction does not interfere with DMD-binding and is required for DMD and betaDAG1 retention at costameres. Interacts (via N-terminal ANK repeats) with SCHIP1 isoform 7 (via C-terminus); this interaction is required for the localization at axon initial segments (AISs) and nodes of Ranvier (NRs). Interacts with PLEC and FLNC. Interacts (via ANK repeats) with IQCJ-SCHIP1; required for IQCJ-SCHIP1 localization at axon initial segments (AIS) and nodes of Ranvier. Interacts with SCHIP1. Interacts with KCNA1; this inhibits channel activity. Interacts with SCN5A. Interacts with PKP2 and GJA1/CX43. In terms of assembly, interacts (via its C-terminal muscle-specific Obscurin/Titin-Binding-related domain sequence) with PLEC and FLNC. As to expression, expressed in the heart (at protein level). Expressed in skeletal muscle (at protein level). Expressed at highest levels in brain and testis, followed by skin, kidney, liver and spleen. May be specifically expressed in muscle tissues, including heart and skeletal muscle (extensor digitorum longus) (at protein level). In terms of tissue distribution, expressed in skeletal muscle, brain, lung, heart, testes and kidney.

It localises to the cytoplasm. The protein localises to the cytoskeleton. Its subcellular location is the cell projection. It is found in the axon. The protein resides in the cell membrane. It localises to the sarcolemma. The protein localises to the postsynaptic cell membrane. Its subcellular location is the lysosome. It is found in the T-tubule. Functionally, membrane-cytoskeleton linker. May participate in the maintenance/targeting of ion channels and cell adhesion molecules at the nodes of Ranvier and axonal initial segments. In skeletal muscle, required for costamere localization of DMD and betaDAG1. Regulates KCNA1 channel activity in function of dietary Mg(2+) levels, and thereby contributes to the regulation of renal Mg(2+) reabsorption. Required for intracellular adhesion and junctional conductance in myocytes, potentially via stabilization of GJA1/CX43 protein abundance and promotion of PKP2, GJA1/CX43, and SCN5A/Nav1.5 localization to cell-cell junctions. The protein is Ankyrin-3 (Ank3) of Rattus norvegicus (Rat).